A 382-amino-acid polypeptide reads, in one-letter code: Glutamyl-tRNA reductase (382 aa).

Residues 38–41, S85, 90–92, and Q96 each bind substrate; these read TCNR and ENQ. C39 serves as the catalytic Nucleophile. 164-169 is an NADP(+) binding site; sequence GAGEMG.

This sequence belongs to the glutamyl-tRNA reductase family. Homodimer.

The enzyme catalyses (S)-4-amino-5-oxopentanoate + tRNA(Glu) + NADP(+) = L-glutamyl-tRNA(Glu) + NADPH + H(+). It participates in porphyrin-containing compound metabolism; protoporphyrin-IX biosynthesis; 5-aminolevulinate from L-glutamyl-tRNA(Glu): step 1/2. Its function is as follows. Catalyzes the NADPH-dependent reduction of glutamyl-tRNA(Glu) to glutamate 1-semialdehyde (GSA). The polypeptide is Glutamyl-tRNA reductase (Methanococcus maripaludis (strain C5 / ATCC BAA-1333)).